The sequence spans 136 residues: Cancer/testis antigen 62 (136 aa).

The tract at residues 1-22 is disordered; it reads MMHTTSYRRLSPPHLTDQPSAY.

As to expression, testis specific. Expressed in cancer cell lines.

The sequence is that of Cancer/testis antigen 62 (CT62) from Homo sapiens (Human).